Here is a 212-residue protein sequence, read N- to C-terminus: KxDL motif-containing protein CG10681 (212 aa).

A disordered region spans residues 128-159 (RSSLAEEAEDDTEAQAKKTAETPAPAAAKPVL). Positions 148–157 (ETPAPAAAKP) are enriched in low complexity.

It belongs to the KXD1 family.

The protein is KxDL motif-containing protein CG10681 of Drosophila melanogaster (Fruit fly).